The sequence spans 243 residues: Ribosomal RNA small subunit methyltransferase G (243 aa).

Residues Gly80, Phe85, 132-133 (IE), and Arg151 contribute to the S-adenosyl-L-methionine site.

Belongs to the methyltransferase superfamily. RNA methyltransferase RsmG family.

It localises to the cytoplasm. In terms of biological role, specifically methylates the N7 position of a guanine in 16S rRNA. The sequence is that of Ribosomal RNA small subunit methyltransferase G from Synechococcus sp. (strain CC9902).